The primary structure comprises 738 residues: 1,4-alpha-glucan branching enzyme GlgB (738 aa).

Asp-399 (nucleophile) is an active-site residue. The active-site Proton donor is the Glu-452.

It belongs to the glycosyl hydrolase 13 family. GlgB subfamily. Monomer.

It carries out the reaction Transfers a segment of a (1-&gt;4)-alpha-D-glucan chain to a primary hydroxy group in a similar glucan chain.. The protein operates within glycan biosynthesis; glycogen biosynthesis. Functionally, catalyzes the formation of the alpha-1,6-glucosidic linkages in glycogen by scission of a 1,4-alpha-linked oligosaccharide from growing alpha-1,4-glucan chains and the subsequent attachment of the oligosaccharide to the alpha-1,6 position. The protein is 1,4-alpha-glucan branching enzyme GlgB of Chlamydia trachomatis serovar D (strain ATCC VR-885 / DSM 19411 / UW-3/Cx).